Reading from the N-terminus, the 265-residue chain is R-spondin-1 (265 aa).

Residues 1-20 (MRLGLCVVALVLSWTHIAVG) form the signal peptide. FU repeat units follow at residues 34 to 85 (AEGS…GYFD) and 91 to 135 (MNKC…GSTA). 11 disulfide bridges follow: Cys40-Cys47, Cys44-Cys53, Cys56-Cys75, Cys79-Cys94, Cys97-Cys105, Cys102-Cys111, Cys114-Cys125, Cys129-Cys142, Cys148-Cys190, Cys159-Cys166, and Cys199-Cys206. An N-linked (GlcNAc...) asparagine glycan is attached at Asn137. A TSP type-1 domain is found at 147–207 (QCEMSEWSPW…KCTVRRTPCP (61 aa)). Trp153 carries a C-linked (Man) tryptophan glycan. Trp156 carries C-linked (Man) tryptophan; by DPY19L3 glycosylation. 2 disordered regions span residues 173–192 (EERTRRVLHAPGGDHTTCSD) and 201–265 (VRRT…TWAQ). Low complexity predominate over residues 245 to 257 (QQQPQPGTTGPLT).

This sequence belongs to the R-spondin family. In terms of assembly, interacts with ZNRF3; promoting indirect interaction between ZNRF3 and LGR4 and membrane clearance of ZNRF3. Identified in a complex composed of RNF43, LGR5 and RSPO1. Interacts with the extracellular domain of FZD8 and LRP6. It however does not form a ternary complex with FZD8 and LRP6. Interacts with WNT1. Binds heparin. Interacts with LGR4, LGR5 and LGR6. Interacts (via FU repeats) with KREM1. Post-translationally, C-, and N-glycosylated. N-glycosylation at Asn-137, negatively influences its secretion and enhancing effect on Wnt/beta-catenin signaling. C-mannosylation at Trp-156 by DPY19L3 is required for its secretion an regulates the enhancing activity of Wnt signaling. Expressed in the dorsal part of the neural tube on 10 and 12 dpc, especially in the boundary region between roof plate and neuroepithelium. This expression is enhanced in the rostral part. Also expressed in other tissues such as truncal region neighboring forelimbs and mesenchymal tissues around the nasal cavity.

It is found in the secreted. Its subcellular location is the nucleus. Its function is as follows. Activator of the canonical Wnt signaling pathway by acting as a ligand for LGR4-6 receptors. Upon binding to LGR4-6 (LGR4, LGR5 or LGR6), LGR4-6 associate with phosphorylated LRP6 and frizzled receptors that are activated by extracellular Wnt receptors, triggering the canonical Wnt signaling pathway to increase expression of target genes. Also regulates the canonical Wnt/beta-catenin-dependent pathway and non-canonical Wnt signaling by acting as an inhibitor of ZNRF3, an important regulator of the Wnt signaling pathway. Acts as a ligand for frizzled FZD8 and LRP6. May negatively regulate the TGF-beta pathway. Has a essential roles in ovary determination. Regulates Wnt signaling by antagonizing DKK1/KREM1-mediated internalization of LRP6 through an interaction with KREM1. The protein is R-spondin-1 (Rspo1) of Mus musculus (Mouse).